A 243-amino-acid polypeptide reads, in one-letter code: Proteasome subunit beta 1 (243 aa).

Positions 1–14 (MRAPQHNSDFSRTV) are enriched in polar residues. The interval 1–34 (MRAPQHNSDFSRTVDQLADDPNPYEPEIGSMPQN) is disordered. Positions 1-48 (MRAPQHNSDFSRTVDQLADDPNPYEPEIGSMPQNDLTRADLDNVNKTG) are cleaved as a propeptide — removed in mature form; by autocatalysis. Thr49 (nucleophile) is an active-site residue.

It belongs to the peptidase T1B family. As to quaternary structure, the 20S proteasome core is composed of 14 alpha and 14 beta subunits that assemble into four stacked heptameric rings, resulting in a barrel-shaped structure. The two inner rings, each composed of seven catalytic beta subunits, are sandwiched by two outer rings, each composed of seven alpha subunits. The catalytic chamber with the active sites is on the inside of the barrel. Has a gated structure, the ends of the cylinder being occluded by the N-termini of the alpha-subunits. Is capped at one or both ends by the proteasome regulatory ATPase, PAN.

Its subcellular location is the cytoplasm. The enzyme catalyses Cleavage of peptide bonds with very broad specificity.. With respect to regulation, the formation of the proteasomal ATPase PAN-20S proteasome complex, via the docking of the C-termini of PAN into the intersubunit pockets in the alpha-rings, triggers opening of the gate for substrate entry. Interconversion between the open-gate and close-gate conformations leads to a dynamic regulation of the 20S proteasome proteolysis activity. Component of the proteasome core, a large protease complex with broad specificity involved in protein degradation. The chain is Proteasome subunit beta 1 from Haloterrigena turkmenica (strain ATCC 51198 / DSM 5511 / JCM 9101 / NCIMB 13204 / VKM B-1734 / 4k) (Halococcus turkmenicus).